The primary structure comprises 235 residues: Phosphoglycolate phosphatase (235 aa).

Asp14 functions as the Nucleophile in the catalytic mechanism. Residues Asp14, Asp16, and Asp177 each contribute to the Mg(2+) site.

It belongs to the HAD-like hydrolase superfamily. CbbY/CbbZ/Gph/YieH family. It depends on Mg(2+) as a cofactor.

The catalysed reaction is 2-phosphoglycolate + H2O = glycolate + phosphate. The protein operates within organic acid metabolism; glycolate biosynthesis; glycolate from 2-phosphoglycolate: step 1/1. Functionally, specifically catalyzes the dephosphorylation of 2-phosphoglycolate. Is involved in the dissimilation of the intracellular 2-phosphoglycolate formed during the DNA repair of 3'-phosphoglycolate ends, a major class of DNA lesions induced by oxidative stress. This Neisseria meningitidis serogroup A / serotype 4A (strain DSM 15465 / Z2491) protein is Phosphoglycolate phosphatase.